A 154-amino-acid polypeptide reads, in one-letter code: SsrA-binding protein (154 aa).

Belongs to the SmpB family.

The protein resides in the cytoplasm. Its function is as follows. Required for rescue of stalled ribosomes mediated by trans-translation. Binds to transfer-messenger RNA (tmRNA), required for stable association of tmRNA with ribosomes. tmRNA and SmpB together mimic tRNA shape, replacing the anticodon stem-loop with SmpB. tmRNA is encoded by the ssrA gene; the 2 termini fold to resemble tRNA(Ala) and it encodes a 'tag peptide', a short internal open reading frame. During trans-translation Ala-aminoacylated tmRNA acts like a tRNA, entering the A-site of stalled ribosomes, displacing the stalled mRNA. The ribosome then switches to translate the ORF on the tmRNA; the nascent peptide is terminated with the 'tag peptide' encoded by the tmRNA and targeted for degradation. The ribosome is freed to recommence translation, which seems to be the essential function of trans-translation. The sequence is that of SsrA-binding protein from Streptococcus thermophilus (strain CNRZ 1066).